The chain runs to 421 residues: Type II methyltransferase M.SfiI (421 aa).

This sequence belongs to the N(4)/N(6)-methyltransferase family. N(4) subfamily.

The enzyme catalyses a 2'-deoxycytidine in DNA + S-adenosyl-L-methionine = an N(4)-methyl-2'-deoxycytidine in DNA + S-adenosyl-L-homocysteine + H(+). A beta subtype methylase, recognizes the double-stranded sequence 5'-GGCCNNNNNGGCC-3', methylates C-? on both strands, and protects the DNA from cleavage by the SfiI endonuclease. The polypeptide is Type II methyltransferase M.SfiI (Streptomyces fimbriatus).